The sequence spans 229 residues: Ribonuclease 3 (229 aa).

The 123-residue stretch at 3–125 folds into the RNase III domain; it reads VNALQEKLGY…LIGGIFLDSN (123 aa). Glutamate 38 lines the Mg(2+) pocket. The active site involves aspartate 42. Asparagine 111 and glutamate 114 together coordinate Mg(2+). Glutamate 114 is an active-site residue. The region spanning 155–225 is the DRBM domain; it reads DPKTRLQEYM…AAKVLEALEH (71 aa).

This sequence belongs to the ribonuclease III family. As to quaternary structure, homodimer. It depends on Mg(2+) as a cofactor.

It localises to the cytoplasm. The enzyme catalyses Endonucleolytic cleavage to 5'-phosphomonoester.. Its function is as follows. Digests double-stranded RNA. Involved in the processing of primary rRNA transcript to yield the immediate precursors to the large and small rRNAs (23S and 16S). Processes some mRNAs, and tRNAs when they are encoded in the rRNA operon. Processes pre-crRNA and tracrRNA of type II CRISPR loci if present in the organism. This chain is Ribonuclease 3, found in Blochmanniella pennsylvanica (strain BPEN).